Here is a 185-residue protein sequence, read N- to C-terminus: Photosystem I assembly protein Ycf4 (185 aa).

Transmembrane regions (helical) follow at residues 20 to 40 and 57 to 77; these read GNFFWACILFLGSLGFLSVGA and ILFFPQGVVMSFYGIAGLFIS.

This sequence belongs to the Ycf4 family.

It localises to the plastid. It is found in the chloroplast thylakoid membrane. Seems to be required for the assembly of the photosystem I complex. In Lolium perenne (Perennial ryegrass), this protein is Photosystem I assembly protein Ycf4.